We begin with the raw amino-acid sequence, 365 residues long: Alpha-keto acid-binding periplasmic protein TakP (365 aa).

The tat-type signal signal peptide spans 1–26 (MDRRSFITKAAVGGAAASALAAPALA). Substrate-binding positions include 99 to 100 (YY), Gln156, and Arg177. Gln156 is a Na(+) binding site. The Na(+) site is built by Glu214, Trp215, and Glu240.

This sequence belongs to the bacterial solute-binding protein 7 family. Homodimer. The complex comprises the extracytoplasmic solute receptor protein TakP, and the two transmembrane proteins TakQ and TakM. Post-translationally, predicted to be exported by the Tat system. The position of the signal peptide cleavage has not been experimentally proven.

Its subcellular location is the periplasm. In terms of biological role, part of the tripartite ATP-independent periplasmic (TRAP) transport system TakPQM involved in the uptake of alpha-keto acids. This protein specifically binds alpha-keto acids including pyruvate, oxobutyrate, oxovalerate and 4-methyl-2-oxovalerate. Ligand-binding affinity increases with the increasing chain length of the aliphatic backbone of the ligand. Is not able to bind alpha-ketoglutarate. This Cereibacter sphaeroides (strain ATCC 17023 / DSM 158 / JCM 6121 / CCUG 31486 / LMG 2827 / NBRC 12203 / NCIMB 8253 / ATH 2.4.1.) (Rhodobacter sphaeroides) protein is Alpha-keto acid-binding periplasmic protein TakP.